Here is a 470-residue protein sequence, read N- to C-terminus: MAKGDKINFSTPSGFPEFLPSEKRLELYLLDIIRRVFESYGFTPIETPAVERLEVLQAKGNQGDNIIYGIDPILPPNRQAEKDKSGETGKDKSGETGSEARALKFDQTVPLAAYIARHLNELIFPFARYQTDMVFRGERAKDGRFRQFRQCDIDVVARRELSLLYDAQMPAIITEIFEAINIGDFLIRINNRKVLTGFFKSVGITEDKIKSCINIVDNLEKIGESKVKQELEKEGVSGEQTQKIIDFIKIDGSVDEVLDKLKHLTLNLPETEQLSLGISELETVIAGVRNLGVTENRFCIDLSIARGLDYYTGTVYETTLLGHEALGSICSGGRYEELVGVFLGEKMPGVGISIGLTRLISRLLKAGILSTLAATPAQVMVVNMQEDLMPTYLKVSQHLRQAGINVITNFDKRPLGKQFQLADKQGIQFCVIIGSEEAAAQKSSLKDLKSGEQVEVLLVNLAEEVKRRLS.

The disordered stretch occupies residues 69–99; the sequence is GIDPILPPNRQAEKDKSGETGKDKSGETGSE. Basic and acidic residues predominate over residues 79–94; sequence QAEKDKSGETGKDKSG.

Belongs to the class-II aminoacyl-tRNA synthetase family. Homodimer.

It is found in the cytoplasm. It carries out the reaction tRNA(His) + L-histidine + ATP = L-histidyl-tRNA(His) + AMP + diphosphate + H(+). In Nostoc punctiforme (strain ATCC 29133 / PCC 73102), this protein is Histidine--tRNA ligase.